The following is a 945-amino-acid chain: Isoleucine--tRNA ligase (945 aa).

The span at 1–10 shows a compositional bias: basic and acidic residues; sequence MSNKKADSKP. Residues 1–21 form a disordered region; sequence MSNKKADSKPQAKYPVNLLDT. Residues 66-76 carry the 'HIGH' region motif; it reads PYANGDIHLGH. An L-isoleucyl-5'-AMP-binding site is contributed by Glu581. Positions 622–626 match the 'KMSKS' region motif; sequence KMSKS. Lys625 serves as a coordination point for ATP. Zn(2+) is bound by residues Cys908, Cys911, Cys928, and Cys931.

Belongs to the class-I aminoacyl-tRNA synthetase family. IleS type 1 subfamily. As to quaternary structure, monomer. The cofactor is Zn(2+).

The protein localises to the cytoplasm. The catalysed reaction is tRNA(Ile) + L-isoleucine + ATP = L-isoleucyl-tRNA(Ile) + AMP + diphosphate. In terms of biological role, catalyzes the attachment of isoleucine to tRNA(Ile). As IleRS can inadvertently accommodate and process structurally similar amino acids such as valine, to avoid such errors it has two additional distinct tRNA(Ile)-dependent editing activities. One activity is designated as 'pretransfer' editing and involves the hydrolysis of activated Val-AMP. The other activity is designated 'posttransfer' editing and involves deacylation of mischarged Val-tRNA(Ile). The sequence is that of Isoleucine--tRNA ligase from Burkholderia multivorans (strain ATCC 17616 / 249).